Consider the following 133-residue polypeptide: MTSSFALVLLLGGVAVCVATGVFGGYSERANHQANPEFLNLAHYATSTWSAQQPGKTHFDTVAEVLKVETQVVAGTNYRLTLKVAESTCELTSTYNKDTCLPKADAAHRTCTTVVFESLQGDKSVSSFECEAA.

A signal peptide spans 1–19 (MTSSFALVLLLGGVAVCVA). The Cystatin domain maps to 30 to 117 (ANHQANPEFL…HRTCTTVVFE (88 aa)). Intrachain disulfides connect cysteine 89/cysteine 100 and cysteine 111/cysteine 130.

The protein belongs to the cystatin family. Monomer. Can form homodimers in vitro, but probably not in vivo. Homodimers are predicted to be inactive; dimerization disrupts the interaction with target proteases.

It is found in the secreted. Its function is as follows. Inhibitor of cysteine proteinases. Inhibits host immune responses via its inhibition of host cathepsins. Contributes to the suppression of the host's immune response to tick salivary proteins and is important for successful feeding on hosts. Inhibits differentiation of host dendritic cells. Inhibits proliferation of host T-cells in response to antigen stimulus. Down-regulates TLR2-mediated host responses to infection by B.burgdorferi and the production of the chemokine CCL3 by host dendritic cells. Down-regulates host responses to infection by B.burgdorferi and the production of IFNB1 by host dendritic cells. Down-regulates IL1B production by host mast cells, and this then leads to impaired activation of IL1R1, resulting in decreased IL9 production. Inhibits host inflammatory reactions and recruitment of host neutrophils. Inhibits papain and cathepsin L (CTSL) (in vitro). Inhibits cathepsin S (CTSS) (in vitro). Inhibits CTSV and CTSC, but to a lesser degree (in vitro). The chain is Salivary cystatin-L from Ixodes scapularis (Black-legged tick).